A 347-amino-acid polypeptide reads, in one-letter code: NADH-ubiquinone oxidoreductase chain 2 (347 aa).

10 consecutive transmembrane segments (helical) span residues Ile13–Leu33, Ala55–Leu75, Leu96–Pro116, Pro123–Tyr143, Asn150–Leu170, Ile178–Pro198, Thr201–Leu221, Thr247–Ile267, Ile277–Ile297, and Phe325–Met345.

This sequence belongs to the complex I subunit 2 family. As to quaternary structure, core subunit of respiratory chain NADH dehydrogenase (Complex I) which is composed of 45 different subunits. Interacts with TMEM242.

It localises to the mitochondrion inner membrane. It carries out the reaction a ubiquinone + NADH + 5 H(+)(in) = a ubiquinol + NAD(+) + 4 H(+)(out). In terms of biological role, core subunit of the mitochondrial membrane respiratory chain NADH dehydrogenase (Complex I) which catalyzes electron transfer from NADH through the respiratory chain, using ubiquinone as an electron acceptor. Essential for the catalytic activity and assembly of complex I. This is NADH-ubiquinone oxidoreductase chain 2 from Gorilla gorilla gorilla (Western lowland gorilla).